The sequence spans 413 residues: Putative F-box protein At3g17560 (413 aa).

In terms of domain architecture, F-box spans 9–55 (TKLLFDLPQDVIEEIFSKVPVTCLRRIRSTCKRLYALLKDRGFIRKH).

This chain is Putative F-box protein At3g17560, found in Arabidopsis thaliana (Mouse-ear cress).